The sequence spans 84 residues: U1-hexatoxin-Iw1a (84 aa).

Residues 1–18 form the signal peptide; the sequence is MLKFVVVICLVIMAITFA. Cystine bridges form between Cys-21/Cys-32, Cys-26/Cys-40, Cys-31/Cys-66, Cys-50/Cys-74, and Cys-68/Cys-81.

This sequence belongs to the MIT-like AcTx family. As to expression, expressed by the venom gland.

The protein resides in the secreted. The chain is U1-hexatoxin-Iw1a from Illawarra wisharti (Illawarra funnel-web spider).